A 304-amino-acid polypeptide reads, in one-letter code: tRNA pseudouridine synthase B (304 aa).

Asp-38 serves as the catalytic Nucleophile.

The protein belongs to the pseudouridine synthase TruB family. Type 1 subfamily.

The catalysed reaction is uridine(55) in tRNA = pseudouridine(55) in tRNA. Responsible for synthesis of pseudouridine from uracil-55 in the psi GC loop of transfer RNAs. In Listeria welshimeri serovar 6b (strain ATCC 35897 / DSM 20650 / CCUG 15529 / CIP 8149 / NCTC 11857 / SLCC 5334 / V8), this protein is tRNA pseudouridine synthase B.